A 393-amino-acid polypeptide reads, in one-letter code: S-adenosylmethionine synthase (393 aa).

H16 serves as a coordination point for ATP. Mg(2+) is bound at residue D18. E44 contributes to the K(+) binding site. Residues E57 and Q100 each contribute to the L-methionine site. Positions 100 to 110 (QSNDIAQGVDH) are flexible loop. ATP-binding positions include 167 to 169 (DAK), 238 to 239 (RF), D247, 253 to 254 (RK), A270, and K274. Residue D247 participates in L-methionine binding. Residue K278 participates in L-methionine binding.

Belongs to the AdoMet synthase family. As to quaternary structure, homotetramer; dimer of dimers. Requires Mg(2+) as cofactor. The cofactor is K(+).

The protein resides in the cytoplasm. It carries out the reaction L-methionine + ATP + H2O = S-adenosyl-L-methionine + phosphate + diphosphate. Its pathway is amino-acid biosynthesis; S-adenosyl-L-methionine biosynthesis; S-adenosyl-L-methionine from L-methionine: step 1/1. Its function is as follows. Catalyzes the formation of S-adenosylmethionine (AdoMet) from methionine and ATP. The overall synthetic reaction is composed of two sequential steps, AdoMet formation and the subsequent tripolyphosphate hydrolysis which occurs prior to release of AdoMet from the enzyme. The sequence is that of S-adenosylmethionine synthase from Leptothrix cholodnii (strain ATCC 51168 / LMG 8142 / SP-6) (Leptothrix discophora (strain SP-6)).